The chain runs to 219 residues: Ribose-5-phosphate isomerase A (219 aa).

Residues 28 to 31 (SGST), 81 to 84 (DGAD), and 94 to 97 (KGGG) each bind substrate. The active-site Proton acceptor is the glutamate 103. Lysine 121 contacts substrate.

It belongs to the ribose 5-phosphate isomerase family. In terms of assembly, homodimer.

It carries out the reaction aldehydo-D-ribose 5-phosphate = D-ribulose 5-phosphate. The protein operates within carbohydrate degradation; pentose phosphate pathway; D-ribose 5-phosphate from D-ribulose 5-phosphate (non-oxidative stage): step 1/1. In terms of biological role, catalyzes the reversible conversion of ribose-5-phosphate to ribulose 5-phosphate. The sequence is that of Ribose-5-phosphate isomerase A from Glaesserella parasuis serovar 5 (strain SH0165) (Haemophilus parasuis).